Here is a 967-residue protein sequence, read N- to C-terminus: Protein moonraker (967 aa).

Positions 178 to 201 (SHPGQSDLTVPNSPPTHDPGLQPH) are disordered. The span at 179 to 188 (HPGQSDLTVP) shows a compositional bias: polar residues. Residues Ser-287 and Ser-409 each carry the phosphoserine modification. Disordered regions lie at residues 401–431 (ALER…SRPS) and 490–601 (KAGK…SHLT). Residues 525-543 (QSQPHSKSRVQQTTVSSRL) are compositionally biased toward polar residues. Positions 557–568 (WIPPNPTSPPAS) are enriched in pro residues. Residues 616–642 (AETSKRLKELEELKAKEIDSMQKQRLD) are a coiled coil. Residues Ser-700 and Ser-826 each carry the phosphoserine modification. The disordered stretch occupies residues 849-872 (RPCNGNSLDESVGTEEGSEKREAP). The necessary and sufficient for CEP20-binding stretch occupies residues 885–967 (GRAPLFVPPG…FTSEFLEAAT (83 aa)).

Interacts with CEP63. Interacts with WDR62. Forms a complex with OFD1 and CEP20/FOR20. Interacts with PCM1.

Its subcellular location is the cytoplasm. It is found in the cytoskeleton. The protein resides in the microtubule organizing center. It localises to the centrosome. The protein localises to the centriole. Its subcellular location is the centriolar satellite. Its function is as follows. Involved in centriole duplication. Positively regulates CEP63 centrosomal localization. Required for WDR62 centrosomal localization and promotes the centrosomal localization of CDK2. May play a role in cilium assembly. This Homo sapiens (Human) protein is Protein moonraker (KIAA0753).